A 137-amino-acid polypeptide reads, in one-letter code: Large ribosomal subunit protein uL16 (137 aa).

The protein belongs to the universal ribosomal protein uL16 family. Part of the 50S ribosomal subunit.

Binds 23S rRNA and is also seen to make contacts with the A and possibly P site tRNAs. In Streptococcus pneumoniae serotype 2 (strain D39 / NCTC 7466), this protein is Large ribosomal subunit protein uL16.